The chain runs to 141 residues: ATP synthase epsilon chain 1 (141 aa).

The protein belongs to the ATPase epsilon chain family. F-type ATPases have 2 components, CF(1) - the catalytic core - and CF(0) - the membrane proton channel. CF(1) has five subunits: alpha(3), beta(3), gamma(1), delta(1), epsilon(1). CF(0) has three main subunits: a, b and c.

The protein resides in the cell inner membrane. Produces ATP from ADP in the presence of a proton gradient across the membrane. The sequence is that of ATP synthase epsilon chain 1 from Thiobacillus denitrificans (strain ATCC 25259 / T1).